The primary structure comprises 651 residues: MASATLGSSSSSASPAVAELCQNTPETFLEASKLLLTYADNILRNPSDEKYRSIRIGNTAFSTRLLPVRGAVECLFEMGFEEGETHLIFPKKASVEQLQKIRDLIAIERSSRLDGSSKKVQFSQHPAAAKLPLEQSEDPAGLIRHSGNQTGQLPSLPSAPMVVGDSTILKVLQSNIQHVQLYENPVLQEKALTCIPVSELKRKAQEKLFRARKLDKGTNVSDEDFLLLELLHWFKEEFFRWVNNIVCSKCGGETRSRDEALLPNDDELKWGAKNVENHYCDACQLSNRFPRYNNPEKLLETRCGRCGEWANCFTLCCRALGFEARYVWDYTDHVWTEVYSPSQQRWLHCDACEDVCDKPLLYEIGWGKKLSYIIAFSKDEVVDVTWRYSCKHDEVMSRRTKVKEELLRETINGLNKQRQLSLSESRRKELLQRIIVELVEFISPKTPRPGELGGRVSGSLAWRVARGETGLERKEILFIPSENEKISKQFHLRYDIVRDRYIRVSDNNINISGWENGVWKMESIFRKVEKDWNMVYLARKEGSSFAYISWKFECGSAGLKVDTVSIRTSSQSFESGSVRWKLRSETAQVNLLGDKNLRSYNDFSGATEVTLEAELSRGDGDVAWQHTQLFRQSLNDSGENGLEIIITFNDL.

A2 bears the N-acetylalanine mark. Residues E30–K91 form the PUB domain. Zn(2+) contacts are provided by C247, C250, C280, and C283. C306 (nucleophile) is an active-site residue. Residues H333 and D350 contribute to the active site. In terms of domain architecture, PAW spans E451–L651.

It belongs to the transglutaminase-like superfamily. PNGase family. Component of a complex required to couple retrotranslocation, ubiquitination and deglycosylation composed of NGLY1, SAKS1, AMFR, VCP and RAD23B. Interacts with the proteasome components RAD23B and PSMC1. Interacts with directly with VCP. Interacts with DERL1, bringing it close to the endoplasmic reticulum membrane. Interacts with SAKS1. Zn(2+) serves as cofactor. In terms of tissue distribution, ubiquitously expressed with highest level in testis.

It is found in the cytoplasm. It catalyses the reaction Hydrolysis of an N(4)-(acetyl-beta-D-glucosaminyl)asparagine residue in which the glucosamine residue may be further glycosylated, to yield a (substituted) N-acetyl-beta-D-glucosaminylamine and a peptide containing an aspartate residue.. Inhibited by Z-VAD-fmk, a well-known caspase inhibitor, which inhibits enzyme activity through covalent binding of the carbohydrate to the single Cys-306 residue. Functionally, specifically deglycosylates the denatured form of N-linked glycoproteins in the cytoplasm and assists their proteasome-mediated degradation. Cleaves the beta-aspartyl-glucosamine (GlcNAc) of the glycan and the amide side chain of Asn, converting Asn to Asp. Prefers proteins containing high-mannose over those bearing complex type oligosaccharides. Can recognize misfolded proteins in the endoplasmic reticulum that are exported to the cytosol to be destroyed and deglycosylate them, while it has no activity toward native proteins. Deglycosylation is a prerequisite for subsequent proteasome-mediated degradation of some, but not all, misfolded glycoproteins. The protein is Peptide-N(4)-(N-acetyl-beta-glucosaminyl)asparagine amidase (Ngly1) of Mus musculus (Mouse).